The primary structure comprises 207 residues: Negative modulator of initiation of replication (207 aa).

Polar residues predominate over residues 43–54 (ATPITSSVTPSA). Positions 43–63 (ATPITSSVTPSAPRQEAVNDE) are disordered.

This sequence belongs to the SeqA family. As to quaternary structure, homodimer. Polymerizes to form helical filaments.

It is found in the cytoplasm. Negative regulator of replication initiation, which contributes to regulation of DNA replication and ensures that replication initiation occurs exactly once per chromosome per cell cycle. Binds to pairs of hemimethylated GATC sequences in the oriC region, thus preventing assembly of replication proteins and re-initiation at newly replicated origins. Repression is relieved when the region becomes fully methylated. The chain is Negative modulator of initiation of replication from Psychromonas ingrahamii (strain DSM 17664 / CCUG 51855 / 37).